We begin with the raw amino-acid sequence, 156 residues long: Ribosomal RNA large subunit methyltransferase H (156 aa).

S-adenosyl-L-methionine is bound by residues Gly104 and 123–128 (LSPMVM).

Belongs to the RNA methyltransferase RlmH family. As to quaternary structure, homodimer.

It localises to the cytoplasm. The enzyme catalyses pseudouridine(1915) in 23S rRNA + S-adenosyl-L-methionine = N(3)-methylpseudouridine(1915) in 23S rRNA + S-adenosyl-L-homocysteine + H(+). In terms of biological role, specifically methylates the pseudouridine at position 1915 (m3Psi1915) in 23S rRNA. In Bdellovibrio bacteriovorus (strain ATCC 15356 / DSM 50701 / NCIMB 9529 / HD100), this protein is Ribosomal RNA large subunit methyltransferase H.